A 369-amino-acid chain; its full sequence is D-alanine--D-alanine ligase (369 aa).

One can recognise an ATP-grasp domain in the interval 152-359 (KKLFAAEGLP…YPSLLATMVE (208 aa)). 180–235 (RERLGLPVFVKPARGGSSIGVSRVSSWDELDAAVAAARDHDPKVIVEAAIAGRELE) provides a ligand contact to ATP. Mg(2+) contacts are provided by D314, E326, and N328.

It belongs to the D-alanine--D-alanine ligase family. Requires Mg(2+) as cofactor. The cofactor is Mn(2+).

The protein localises to the cytoplasm. It catalyses the reaction 2 D-alanine + ATP = D-alanyl-D-alanine + ADP + phosphate + H(+). It functions in the pathway cell wall biogenesis; peptidoglycan biosynthesis. Its function is as follows. Cell wall formation. The chain is D-alanine--D-alanine ligase from Mycolicibacterium paratuberculosis (strain ATCC BAA-968 / K-10) (Mycobacterium paratuberculosis).